Here is a 247-residue protein sequence, read N- to C-terminus: Adenosylcobinamide-GDP ribazoletransferase (247 aa).

5 consecutive transmembrane segments (helical) span residues 34–54 (IITF…VFMV), 57–77 (AWCG…LMTG), 113–133 (GGLA…ELAL), 138–158 (ILAS…LLMY), and 194–214 (VLLL…AIFI).

The protein belongs to the CobS family. Mg(2+) is required as a cofactor.

The protein localises to the cell inner membrane. It carries out the reaction alpha-ribazole + adenosylcob(III)inamide-GDP = adenosylcob(III)alamin + GMP + H(+). It catalyses the reaction alpha-ribazole 5'-phosphate + adenosylcob(III)inamide-GDP = adenosylcob(III)alamin 5'-phosphate + GMP + H(+). It functions in the pathway cofactor biosynthesis; adenosylcobalamin biosynthesis; adenosylcobalamin from cob(II)yrinate a,c-diamide: step 7/7. Its function is as follows. Joins adenosylcobinamide-GDP and alpha-ribazole to generate adenosylcobalamin (Ado-cobalamin). Also synthesizes adenosylcobalamin 5'-phosphate from adenosylcobinamide-GDP and alpha-ribazole 5'-phosphate. The sequence is that of Adenosylcobinamide-GDP ribazoletransferase from Shigella flexneri serotype 5b (strain 8401).